Consider the following 218-residue polypeptide: Probable WRKY transcription factor 12 (218 aa).

A compositionally biased stretch (low complexity) spans 49 to 63; the sequence is SSLSSPSFPIHNSSS. Disordered stretches follow at residues 49-120 and 199-218; these read SSLS…DMKN and HNHIPSDDSTSPDHDCLSSF. Residues 64–77 show a composition bias toward polar residues; sequence TTTTHAPLGFSNNL. Over residues 105-116 the composition is skewed to low complexity; that stretch reads SNSWWRSNSGSG. Positions 139-204 form a DNA-binding region, WRKY; the sequence is SDVDVLDDGY…YEGRHNHIPS (66 aa).

Belongs to the WRKY group II-c family.

It is found in the nucleus. Its function is as follows. Transcription factor. Interacts specifically with the W box (5'-(T)TGAC[CT]-3'), a frequently occurring elicitor-responsive cis-acting element. In Arabidopsis thaliana (Mouse-ear cress), this protein is Probable WRKY transcription factor 12 (WRKY12).